The following is a 2383-amino-acid chain: Reducing polyketide synthase rdc5 (2383 aa).

The region spanning 10-438 is the Ketosynthase family 3 (KS3) domain; sequence RAPIAIIGMS…GTNAHLVLER (429 aa). Residues C186, H321, and H361 each act as for beta-ketoacyl synthase activity in the active site. Positions 550-881 are malonyl-CoA:ACP transacylase (MAT) domain; that stretch reads FVFTGQGAQW…GFAAELFRRG (332 aa). The N-terminal hotdog fold stretch occupies residues 930–1066; sequence KSLIGAERPS…GLFSINYEDS (137 aa). Residues 930-1253 form the PKS/mFAS DH domain; sequence KSLIGAERPS…LAELEVEDAD (324 aa). The tract at residues 932 to 1250 is dehydratase (DH) domain; that stretch reads LIGAERPSLD…DFHLAELEVE (319 aa). Catalysis depends on H962, which acts as the Proton acceptor; for dehydratase activity. A C-terminal hotdog fold region spans residues 1094-1253; the sequence is VEVISKQAFY…LAELEVEDAD (160 aa). The active-site Proton donor; for dehydratase activity is D1160. Residues 1663–1977 are enoyl reductase (ER) domain; it reads GLLNTLHFVS…QGKHVGKMIL (315 aa). The active-site Phosphocysteine intermediate is C1776. The ketoreductase (KR) domain stretch occupies residues 2002-2182; that stretch reads ATYLFIGGLG…VSVNLGIMRD (181 aa). The Carrier domain maps to 2300–2377; it reads AAGPIITKAL…QFAVQIAKKS (78 aa). S2337 bears the O-(pantetheine 4'-phosphoryl)serine mark.

It participates in secondary metabolite biosynthesis. Functionally, reducing polyketide synthase; part of the gene cluster that mediates the biosynthesis of radicicol, a resorcylic acid lactone (RAL) that irreversibly inhibits the HSP90 molecular chaperone, an important target for cancer chemotherapy. The radicicol cluster encodes only two apparent post-PKS enzymes, a cytochrome P450 monooxygenase (rdc4) and a non-heme halogenase (rdc2) that could introduce the epoxide and the chlorine, respectively. If this cluster includes all the genes required for radicicol biosynthesis, the remaining structural features of radicicol are presumably generated by the PKSs rdc1 and rdc5. The C-2' ketone could arise if the R-PKS rdc5 and NR-PKS rdc1 each carry out four iterations, in contrast to the five iteration-three iteration split for the hypothemycin PKSs. The origin of the cis 5',6' double bond is not known. The radicicol R-PKS rdc5 ER domain may catalyze either double bond isomerization or reduction in the third iteration. The protein is Reducing polyketide synthase rdc5 of Metacordyceps chlamydosporia (Nematophagous fungus).